The primary structure comprises 424 residues: CinA-like protein (424 aa).

Belongs to the CinA family.

The protein is CinA-like protein of Shewanella piezotolerans (strain WP3 / JCM 13877).